The chain runs to 431 residues: Histidinol dehydrogenase (431 aa).

Residues Tyr129, Gln191, and Asn214 each coordinate NAD(+). Substrate-binding residues include Ser237, Gln259, and His262. 2 residues coordinate Zn(2+): Gln259 and His262. Residues Glu327 and His328 each act as proton acceptor in the active site. 4 residues coordinate substrate: His328, Asp361, Glu415, and His420. Asp361 serves as a coordination point for Zn(2+). Zn(2+) is bound at residue His420.

Belongs to the histidinol dehydrogenase family. It depends on Zn(2+) as a cofactor.

It carries out the reaction L-histidinol + 2 NAD(+) + H2O = L-histidine + 2 NADH + 3 H(+). The protein operates within amino-acid biosynthesis; L-histidine biosynthesis; L-histidine from 5-phospho-alpha-D-ribose 1-diphosphate: step 9/9. Its function is as follows. Catalyzes the sequential NAD-dependent oxidations of L-histidinol to L-histidinaldehyde and then to L-histidine. This chain is Histidinol dehydrogenase (hisD), found in Lactococcus lactis subsp. lactis (strain IL1403) (Streptococcus lactis).